The sequence spans 341 residues: Dual oxidase maturation factor 1 (341 aa).

The Extracellular segment spans residues 1–24 (MAALGHTLPFYTGTKPTFPMDTTL). The helical transmembrane segment at 25–45 (AVIITIFLTALVTFIIILPGI) threads the bilayer. The Cytoplasmic segment spans residues 46–51 (RGKTRL). The chain crosses the membrane as a helical span at residues 52 to 72 (FWLLRVVTSLFIGAVILAVNF). Residues 73-183 (SSEWSVGHVN…RLAGHYASAM (111 aa)) lie on the Extracellular side of the membrane. Asn-84, Asn-109, and Asn-121 each carry an N-linked (GlcNAc...) asparagine glycan. The chain crosses the membrane as a helical span at residues 184 to 204 (LWVAFLCWLLANVMLSMPVLV). Tyr-205 is a topological domain (cytoplasmic). The helical transmembrane segment at 206–226 (GGHMLLATGLFQLLALFFFSM) threads the bilayer. Residues 227-249 (TTSLISPCPLRLGTAVLHTHHGP) lie on the Extracellular side of the membrane. Residues 250–270 (AFWITLATGLLCILLGLVMAV) traverse the membrane as a helical segment. The Cytoplasmic portion of the chain corresponds to 271–341 (AHRMQPHRLK…EHPKESDCSL (71 aa)).

The protein belongs to the DUOXA family. As to quaternary structure, may interact with NUMB.

The protein resides in the membrane. May be required for the maturation and the transport from the endoplasmic reticulum to the plasma membrane of functional DUOX1. The protein is Dual oxidase maturation factor 1 (Duoxa1) of Mus musculus (Mouse).